The sequence spans 172 residues: Ribosome maturation factor RimM (172 aa).

The region spanning 96–168 (DGEFYYHEII…RIDVTVLEGL (73 aa)) is the PRC barrel domain.

Belongs to the RimM family. Binds ribosomal protein uS19.

The protein resides in the cytoplasm. In terms of biological role, an accessory protein needed during the final step in the assembly of 30S ribosomal subunit, possibly for assembly of the head region. Essential for efficient processing of 16S rRNA. May be needed both before and after RbfA during the maturation of 16S rRNA. It has affinity for free ribosomal 30S subunits but not for 70S ribosomes. In Streptococcus mutans serotype c (strain ATCC 700610 / UA159), this protein is Ribosome maturation factor RimM.